A 47-amino-acid chain; its full sequence is uncharacterized protein (47 aa).

This is an uncharacterized protein from Saccharomyces cerevisiae (strain ATCC 204508 / S288c) (Baker's yeast).